A 218-amino-acid chain; its full sequence is N-(5'-phosphoribosyl)anthranilate isomerase (218 aa).

The protein belongs to the TrpF family.

It catalyses the reaction N-(5-phospho-beta-D-ribosyl)anthranilate = 1-(2-carboxyphenylamino)-1-deoxy-D-ribulose 5-phosphate. The protein operates within amino-acid biosynthesis; L-tryptophan biosynthesis; L-tryptophan from chorismate: step 3/5. In Bordetella parapertussis (strain 12822 / ATCC BAA-587 / NCTC 13253), this protein is N-(5'-phosphoribosyl)anthranilate isomerase.